The sequence spans 137 residues: Small ribosomal subunit protein bS16 (137 aa).

A compositionally biased stretch (basic and acidic residues) spans 104-118; it reads ADEKKKPVLKPKTEK. Residues 104–137 form a disordered region; sequence ADEKKKPVLKPKTEKAAPAPEAAAPEAESTEEQA. Residues 119 to 130 show a composition bias toward low complexity; that stretch reads AAPAPEAAAPEA.

This sequence belongs to the bacterial ribosomal protein bS16 family.

The chain is Small ribosomal subunit protein bS16 from Clavibacter michiganensis subsp. michiganensis (strain NCPPB 382).